The primary structure comprises 173 residues: NEDD4-binding protein 2-like 1 (173 aa).

The tract at residues 1-35 is disordered; that stretch reads MEESFLESFGRLSLRQQQPPPPRPPAPPPLRGTPP. Residues 18 to 32 show a composition bias toward pro residues; it reads QPPPPRPPAPPPLRG.

As to quaternary structure, interacts with dynactin subunit proteins, including DCTN4, DCTN5 and DCTN5.

Its function is as follows. Might play a role in adipocyte differentiation and triglyceride accumulation. In Bos taurus (Bovine), this protein is NEDD4-binding protein 2-like 1 (N4BP2L1).